The sequence spans 178 residues: ATP synthase subunit delta (178 aa).

This sequence belongs to the ATPase delta chain family. As to quaternary structure, F-type ATPases have 2 components, F(1) - the catalytic core - and F(0) - the membrane proton channel. F(1) has five subunits: alpha(3), beta(3), gamma(1), delta(1), epsilon(1). F(0) has three main subunits: a(1), b(2) and c(10-14). The alpha and beta chains form an alternating ring which encloses part of the gamma chain. F(1) is attached to F(0) by a central stalk formed by the gamma and epsilon chains, while a peripheral stalk is formed by the delta and b chains.

The protein resides in the cell inner membrane. Its function is as follows. F(1)F(0) ATP synthase produces ATP from ADP in the presence of a proton or sodium gradient. F-type ATPases consist of two structural domains, F(1) containing the extramembraneous catalytic core and F(0) containing the membrane proton channel, linked together by a central stalk and a peripheral stalk. During catalysis, ATP synthesis in the catalytic domain of F(1) is coupled via a rotary mechanism of the central stalk subunits to proton translocation. In terms of biological role, this protein is part of the stalk that links CF(0) to CF(1). It either transmits conformational changes from CF(0) to CF(1) or is implicated in proton conduction. The polypeptide is ATP synthase subunit delta (Marinomonas sp. (strain MWYL1)).